A 320-amino-acid polypeptide reads, in one-letter code: Methionyl-tRNA formyltransferase (320 aa).

(6S)-5,6,7,8-tetrahydrofolate is bound at residue 114 to 117 (SLLP).

Belongs to the Fmt family.

The catalysed reaction is L-methionyl-tRNA(fMet) + (6R)-10-formyltetrahydrofolate = N-formyl-L-methionyl-tRNA(fMet) + (6S)-5,6,7,8-tetrahydrofolate + H(+). Attaches a formyl group to the free amino group of methionyl-tRNA(fMet). The formyl group appears to play a dual role in the initiator identity of N-formylmethionyl-tRNA by promoting its recognition by IF2 and preventing the misappropriation of this tRNA by the elongation apparatus. This chain is Methionyl-tRNA formyltransferase, found in Acinetobacter baumannii (strain AB0057).